The chain runs to 401 residues: L-rhamnonate dehydratase (401 aa).

Substrate-binding residues include His29 and Arg55. Positions 222, 248, and 276 each coordinate Mg(2+). Catalysis depends on His325, which acts as the Proton acceptor. Glu345 provides a ligand contact to substrate.

It belongs to the mandelate racemase/muconate lactonizing enzyme family. RhamD subfamily. Homooctamer; tetramer of dimers. Mg(2+) serves as cofactor.

It carries out the reaction L-rhamnonate = 2-dehydro-3-deoxy-L-rhamnonate + H2O. Catalyzes the dehydration of L-rhamnonate to 2-keto-3-deoxy-L-rhamnonate (KDR). The chain is L-rhamnonate dehydratase from Salmonella heidelberg (strain SL476).